A 504-amino-acid chain; its full sequence is Signal transduction histidine-protein kinase/phosphatase MprB (504 aa).

The Cytoplasmic portion of the chain corresponds to 1–26; that stretch reads MWWFRRRDRAPLRATSSLSLRWRVML. The chain crosses the membrane as a helical span at residues 27-47; it reads LAMSMVAMVVVLMSFAVYAVI. Residues 48–163 are Extracellular-facing; the sequence is SAALYSDIDN…PTEAVMNKLR (116 aa). The chain crosses the membrane as a helical span at residues 164-184; sequence WVLLIVGGIGVAVAAVAGGMV. Topologically, residues 185 to 504 are cytoplasmic; sequence TRAGLRPVGR…SVESQSTRAT (320 aa). One can recognise an HAMP domain in the interval 186-238; that stretch reads RAGLRPVGRLTEAAERVARTDDLRPIPVFGSDELARLTEAFNLMLRALAESRE. One can recognise a Histidine kinase domain in the interval 246-466; it reads DAGHELRTPL…SIYVLLPGRR (221 aa). Position 249 is a phosphohistidine; by autocatalysis (His-249). The tract at residues 471 to 504 is disordered; the sequence is QLPGATAGARSTDIENSRGSANVISVESQSTRAT. A compositionally biased stretch (polar residues) spans 487 to 504; the sequence is SRGSANVISVESQSTRAT.

The cofactor is Mg(2+). Mn(2+) serves as cofactor. Autophosphorylated.

Its subcellular location is the cell membrane. It carries out the reaction ATP + protein L-histidine = ADP + protein N-phospho-L-histidine.. Member of the two-component regulatory system MprB/MprA which contributes to maintaining a balance among several systems involved in stress resistance and is required for establishment and maintenance of persistent infection in the host. In response to environmental signals MprB acts both as a membrane-associated protein kinase that undergoes autophosphorylation and subsequently transfers the phosphate to MprA, and a protein phosphatase that dephosphorylates phospho-MprA. The polypeptide is Signal transduction histidine-protein kinase/phosphatase MprB (mprB) (Mycobacterium tuberculosis (strain ATCC 25177 / H37Ra)).